A 429-amino-acid chain; its full sequence is Cyclin-B2-3 (429 aa).

The segment covering 86–101 has biased composition (basic and acidic residues); that stretch reads ADHKPHIRDEETKKPD. The interval 86–109 is disordered; the sequence is ADHKPHIRDEETKKPDSVSSEEPE.

Belongs to the cyclin family. Cyclin AB subfamily.

This chain is Cyclin-B2-3 (CYCB2-3), found in Arabidopsis thaliana (Mouse-ear cress).